We begin with the raw amino-acid sequence, 286 residues long: Energy-coupling factor transporter ATP-binding protein EcfA2 (286 aa).

Residues 3 to 246 form the ABC transporter domain; that stretch reads IRFDNVSYTY…KKKLADWHIG (244 aa). Residue 40-47 participates in ATP binding; the sequence is GQTGSGKS.

It belongs to the ABC transporter superfamily. Energy-coupling factor EcfA family. In terms of assembly, forms a stable energy-coupling factor (ECF) transporter complex composed of 2 membrane-embedded substrate-binding proteins (S component), 2 ATP-binding proteins (A component) and 2 transmembrane proteins (T component).

It localises to the cell membrane. ATP-binding (A) component of a common energy-coupling factor (ECF) ABC-transporter complex. Unlike classic ABC transporters this ECF transporter provides the energy necessary to transport a number of different substrates. The chain is Energy-coupling factor transporter ATP-binding protein EcfA2 from Staphylococcus aureus (strain USA300).